The chain runs to 180 residues: Large ribosomal subunit protein uL5 (180 aa).

It belongs to the universal ribosomal protein uL5 family. In terms of assembly, part of the 50S ribosomal subunit; part of the 5S rRNA/L5/L18/L25 subcomplex. Contacts the 5S rRNA and the P site tRNA. Forms a bridge to the 30S subunit in the 70S ribosome.

In terms of biological role, this is one of the proteins that bind and probably mediate the attachment of the 5S RNA into the large ribosomal subunit, where it forms part of the central protuberance. In the 70S ribosome it contacts protein S13 of the 30S subunit (bridge B1b), connecting the 2 subunits; this bridge is implicated in subunit movement. Contacts the P site tRNA; the 5S rRNA and some of its associated proteins might help stabilize positioning of ribosome-bound tRNAs. In Lactobacillus helveticus (strain DPC 4571), this protein is Large ribosomal subunit protein uL5.